The chain runs to 388 residues: GTPase Obg (388 aa).

The Obg domain occupies 4-162; the sequence is SNFVDYVKIY…MTVIMELKLL (159 aa). The OBG-type G domain occupies 163 to 329; sequence ADVGLVGFPN…LKDILWEELN (167 aa). GTP-binding positions include 169-176, 194-198, 216-219, 283-286, and 310-312; these read GFPNAGKS, FTTLE, DIPG, TKSD, and SSV. The Mg(2+) site is built by Ser176 and Thr196. A disordered region spans residues 352 to 388; that stretch reads LKDMGEDEELDYEYEEDADDEDDDLDYEYEEEDWEEK. The segment covering 356 to 388 has biased composition (acidic residues); the sequence is GEDEELDYEYEEDADDEDDDLDYEYEEEDWEEK.

Belongs to the TRAFAC class OBG-HflX-like GTPase superfamily. OBG GTPase family. Monomer. The cofactor is Mg(2+).

Its subcellular location is the cytoplasm. In terms of biological role, an essential GTPase which binds GTP, GDP and possibly (p)ppGpp with moderate affinity, with high nucleotide exchange rates and a fairly low GTP hydrolysis rate. Plays a role in control of the cell cycle, stress response, ribosome biogenesis and in those bacteria that undergo differentiation, in morphogenesis control. The sequence is that of GTPase Obg from Bacteroides thetaiotaomicron (strain ATCC 29148 / DSM 2079 / JCM 5827 / CCUG 10774 / NCTC 10582 / VPI-5482 / E50).